A 217-amino-acid polypeptide reads, in one-letter code: Large ribosomal subunit protein uL3 (217 aa).

Residues 127–162 (GFSRGPMSHGSKNHRAPGSTGAGTTPGRIYPGKRMA) are disordered. Residues 142-153 (APGSTGAGTTPG) show a composition bias toward low complexity.

The protein belongs to the universal ribosomal protein uL3 family. Part of the 50S ribosomal subunit. Forms a cluster with proteins L14 and L19.

One of the primary rRNA binding proteins, it binds directly near the 3'-end of the 23S rRNA, where it nucleates assembly of the 50S subunit. This Prochlorococcus marinus (strain MIT 9312) protein is Large ribosomal subunit protein uL3.